We begin with the raw amino-acid sequence, 265 residues long: H-2 class II histocompatibility antigen, A-Q beta chain (265 aa).

Residues 1–27 (MALQIPSLLLSAAVVVLMVLSSPRTEG) form the signal peptide. The segment at 28 to 122 (GNSERHFVAQ…VETHTSLRRL (95 aa)) is beta-1. At 28 to 227 (GNSERHFVAQ…AQSESARSKM (200 aa)) the chain is on the extracellular side. Cystine bridges form between Cys-42/Cys-106 and Cys-145/Cys-201. N-linked (GlcNAc...) asparagine glycosylation occurs at Asn-46. A beta-2 region spans residues 123-217 (EQPNVAISLS…LKSPITVEWR (95 aa)). Residues 125-213 (PNVAISLSRT…EHPSLKSPIT (89 aa)) enclose the Ig-like C1-type domain. The interval 218 to 227 (AQSESARSKM) is connecting peptide. A helical transmembrane segment spans residues 228–247 (LSGIGGCVLGVIFLGLGLFI). At 248–265 (RHRSQKGPRGPPPAGLLQ) the chain is on the cytoplasmic side.

Belongs to the MHC class II family. Ubiquitinated in immature dendritic cells leading to down-regulation of MHC class II.

It is found in the membrane. The polypeptide is H-2 class II histocompatibility antigen, A-Q beta chain (H2-Ab1) (Mus musculus (Mouse)).